We begin with the raw amino-acid sequence, 106 residues long: Large ribosomal subunit protein uL24 (106 aa).

This sequence belongs to the universal ribosomal protein uL24 family. As to quaternary structure, part of the 50S ribosomal subunit.

One of two assembly initiator proteins, it binds directly to the 5'-end of the 23S rRNA, where it nucleates assembly of the 50S subunit. In terms of biological role, one of the proteins that surrounds the polypeptide exit tunnel on the outside of the subunit. The chain is Large ribosomal subunit protein uL24 from Delftia acidovorans (strain DSM 14801 / SPH-1).